The following is a 451-amino-acid chain: Gamma-aminobutyric acid receptor subunit alpha-2 (451 aa).

Residues 1 to 28 (MKTKLSTCNVWSLLLVLLVWDPVRLVLA) form the signal peptide. At 29 to 249 (NIQEDEAKNN…MTAHFHLKRK (221 aa)) the chain is on the extracellular side. An N-linked (GlcNAc...) asparagine glycan is attached at Asn38. 4-aminobutanoate is bound at residue Arg94. N-linked (GlcNAc...) asparagine glycosylation is present at Asn138. A 4-aminobutanoate-binding site is contributed by Thr157. Residues Cys166 and Cys180 are joined by a disulfide bond. The helical transmembrane segment at 250–270 (IGYFVIQTYLPCIMTVILSQV) threads the bilayer. Residues 271–280 (SFWLNRESVP) are Cytoplasmic-facing. A helical membrane pass occupies residues 281-300 (ARTVFGVTTVLTMTTLSISA). The Extracellular segment spans residues 301 to 311 (RNSLPKVAYAT). Residues 312–332 (AMDWFIAVCYAFVFSALIEFA) form a helical membrane-spanning segment. The Cytoplasmic portion of the chain corresponds to 333–420 (TVNYFTKRGW…FNSVSKIDRM (88 aa)). The interval 389–408 (KSATTPEPNKKPENKPAEAK) is disordered. The span at 396–408 (PNKKPENKPAEAK) shows a compositional bias: basic and acidic residues. Residues 421–441 (SRIVFPVLFGTFNLVYWATYL) traverse the membrane as a helical segment. The Extracellular portion of the chain corresponds to 442–451 (NREPVLGVSP).

It belongs to the ligand-gated ion channel (TC 1.A.9) family. Gamma-aminobutyric acid receptor (TC 1.A.9.5) subfamily. GABRA2 sub-subfamily. Heteropentamer, formed by a combination of alpha (GABRA1-6), beta (GABRB1-3), gamma (GABRG1-3), delta (GABRD), epsilon (GABRE), rho (GABRR1-3), pi (GABRP) and theta (GABRQ) subunits, each subunit exhibiting distinct physiological and pharmacological properties. Interacts with UBQLN1. Interacts with KIF21B. Interacts with LHFPL4. Interacts with SHISA7; interaction leads to the regulation of GABA(A) receptor trafficking, channel deactivation kinetics and pharmacology. In terms of processing, glycosylated.

Its subcellular location is the postsynaptic cell membrane. It is found in the cell membrane. The protein localises to the cytoplasmic vesicle membrane. The protein resides in the cell projection. It localises to the dendrite. It catalyses the reaction chloride(in) = chloride(out). Its activity is regulated as follows. Activated by pentobarbital. Inhibited by the antagonist bicuculline. Alpha subunit of the heteropentameric ligand-gated chloride channel gated by gamma-aminobutyric acid (GABA), a major inhibitory neurotransmitter in the brain. GABA-gated chloride channels, also named GABA(A) receptors (GABAAR), consist of five subunits arranged around a central pore and contain GABA active binding site(s) located at the alpha and beta subunit interface(s). When activated by GABA, GABAARs selectively allow the flow of chloride anions across the cell membrane down their electrochemical gradient. Chloride influx into the postsynaptic neuron following GABAAR opening decreases the neuron ability to generate a new action potential, thereby reducing nerve transmission. The alpha-2 subunit exhibits synaptogenic activity together with beta-2 and very little to no activity together with beta-3, the gamma-2 subunit being necessary but not sufficient to induce rapid synaptic contacts formation. The chain is Gamma-aminobutyric acid receptor subunit alpha-2 from Mus musculus (Mouse).